An 86-amino-acid polypeptide reads, in one-letter code: Neurotoxin-like protein pMD18-NTL1/2/4/5 (86 aa).

An N-terminal signal peptide occupies residues 1-21; the sequence is MKTLLLTLVVLTIACLDLGYT. Cystine bridges form between C24-C45, C38-C62, C66-C78, and C79-C84.

The protein belongs to the three-finger toxin family. Short-chain subfamily. Orphan group IX sub-subfamily. As to expression, expressed by the venom gland.

The protein localises to the secreted. This chain is Neurotoxin-like protein pMD18-NTL1/2/4/5, found in Bungarus multicinctus (Many-banded krait).